The sequence spans 378 residues: Mas-related G-protein coupled receptor MRG (378 aa).

Over 1-77 (MVWGKICWFS…VGQQALPLNI (77 aa)) the chain is Extracellular. N-linked (GlcNAc...) asparagine glycosylation is found at asparagine 54 and asparagine 57. The chain crosses the membrane as a helical span at residues 78-101 (IAPKAVLVSLCGVLLNGTVFWLLC). At 102–109 (CGATNPYM) the chain is on the cytoplasmic side. A helical membrane pass occupies residues 110–136 (VYILHLVAADVIYLCCSAVGFLQVTLL). Residues 137–154 (TYHGVVFFIPDFLAILSP) are Extracellular-facing. The helical transmembrane segment at 155 to 169 (FSFEVCLCLLVAIST) threads the bilayer. Residues 170 to 191 (ERCVCVLFPIWYRCHRPKYTSN) are Cytoplasmic-facing. A helical transmembrane segment spans residues 192–207 (VVCTLIWGLPFCINIV). Over 208 to 221 (KSLFLTYWKHVKAC) the chain is Extracellular. The chain crosses the membrane as a helical span at residues 222 to 248 (VIFLKLSGLFHAILSLVMCVSSLTLLI). The Cytoplasmic segment spans residues 249–264 (RFLCCSQQQKATRVYA). Residues 265–286 (VVQISAPMFLLWALPLSVAPLI) form a helical membrane-spanning segment. Topologically, residues 287 to 297 (TDFKMFVTTSY) are extracellular. A helical transmembrane segment spans residues 298-317 (LISLFLIINSSANPIIYFFV). At 318–378 (GSLRKKRLKE…PREHRVDVET (61 aa)) the chain is on the cytoplasmic side. The segment at 344 to 378 (GRNKKAAGIDPMEQPHSTQHVENLLPREHRVDVET) is disordered. Positions 368–378 (LPREHRVDVET) are enriched in basic and acidic residues.

Belongs to the G-protein coupled receptor 1 family. Mas subfamily.

Its subcellular location is the cell membrane. This chain is Mas-related G-protein coupled receptor MRG (MAS1L), found in Homo sapiens (Human).